The primary structure comprises 185 residues: Elongation factor P (185 aa).

It belongs to the elongation factor P family.

The protein localises to the cytoplasm. It functions in the pathway protein biosynthesis; polypeptide chain elongation. Involved in peptide bond synthesis. Stimulates efficient translation and peptide-bond synthesis on native or reconstituted 70S ribosomes in vitro. Probably functions indirectly by altering the affinity of the ribosome for aminoacyl-tRNA, thus increasing their reactivity as acceptors for peptidyl transferase. In Streptococcus equi subsp. zooepidemicus (strain MGCS10565), this protein is Elongation factor P.